The sequence spans 438 residues: Enolase (438 aa).

Residues H159 and E168 each coordinate substrate. E211 acts as the Proton donor in catalysis. Residues D246, E297, and D322 each contribute to the Mg(2+) site. Substrate is bound by residues E297 and D322. K347 acts as the Proton acceptor in catalysis. Residues 374 to 377 and K398 each bind substrate; that span reads SHRS.

This sequence belongs to the enolase family. As to quaternary structure, homodimer. The cofactor is Mg(2+).

It is found in the cytoplasm. The catalysed reaction is (2R)-2-phosphoglycerate = phosphoenolpyruvate + H2O. It functions in the pathway carbohydrate degradation; glycolysis; pyruvate from D-glyceraldehyde 3-phosphate: step 4/5. This chain is Enolase (ENO1), found in Cryphonectria parasitica (Chestnut blight fungus).